Here is a 56-residue protein sequence, read N- to C-terminus: Conotoxin Cal6.41b (56 aa).

An N-terminal signal peptide occupies residues 1–23 (MSGSGAMLLGLLILVAMATSLDT). 3 disulfide bridges follow: Cys27–Cys41, Cys33–Cys50, and Cys40–Cys54.

As to expression, expressed by the venom duct.

Its subcellular location is the secreted. Probable neurotoxin. This chain is Conotoxin Cal6.41b, found in Californiconus californicus (California cone).